A 325-amino-acid chain; its full sequence is uncharacterized protein (325 aa).

Residues M1 to Q75 form a disordered region. Pro residues-rich tracts occupy residues Y24 to G39 and Y50 to Y70. Helical transmembrane passes span A96–A116, I153–I173, L205–F225, and L273–I293.

The protein localises to the cell membrane. This is an uncharacterized protein from Mycobacterium tuberculosis (strain CDC 1551 / Oshkosh).